The primary structure comprises 326 residues: Eukaryotic translation initiation factor 3 subunit I (326 aa).

WD repeat units follow at residues 8 to 47, 50 to 89, 145 to 184, 188 to 227, and 285 to 326; these read GHER…RLGT, GHQG…VIAS, MVES…KVVD, DHAA…CLKT, and GHFG…NIFE.

The protein belongs to the eIF-3 subunit I family. As to quaternary structure, component of the eukaryotic translation initiation factor 3 (eIF-3) complex. The eIF-3 complex interacts with pix.

It localises to the cytoplasm. Component of the eukaryotic translation initiation factor 3 (eIF-3) complex, which is involved in protein synthesis of a specialized repertoire of mRNAs and, together with other initiation factors, stimulates binding of mRNA and methionyl-tRNAi to the 40S ribosome. The eIF-3 complex specifically targets and initiates translation of a subset of mRNAs involved in cell proliferation. The sequence is that of Eukaryotic translation initiation factor 3 subunit I from Drosophila grimshawi (Hawaiian fruit fly).